The primary structure comprises 173 residues: Protein C2 (173 aa).

The segment at 69–85 is a zinc-finger region; the sequence is CNCHFTIHHECNRGFSH.

This sequence belongs to the geminiviridae transcriptional activator protein family. Monomer. Interacting with and inactivating host adenosine kinase 2 (ADK2) in the cytoplasm. Interacts with and inhibits host SNF1 kinase.

The protein localises to the host cytoplasm. Its function is as follows. Acts as a suppressor of RNA-mediated gene silencing, also known as post-transcriptional gene silencing (PTGS), a mechanism of plant viral defense that limits the accumulation of viral RNAs. Suppresses the host RNA silencing by inhibiting adenosine kinase 2 (ADK2), a kinase involved in a general methylation pathway. Also suppresses the host basal defense by interacting with and inhibiting SNF1 kinase, a key regulator of cell metabolism implicated in innate antiviral defense. Determines pathogenicity. In Beet curly top virus (strain California/Logan) (BCTV), this protein is Protein C2.